The sequence spans 192 residues: Adenylate kinase (192 aa).

12-17 (GSGKTT) is a binding site for ATP. The interval 34–63 (STGDLLRAEVASGSELGKTIDSFISKGNLV) is NMP. AMP contacts are provided by residues T35, R40, 61–63 (NLV), 88–91 (GYPR), and Q95. Residues 130 to 136 (GRNRGAD) form an LID region. R131 provides a ligand contact to ATP. Positions 133 and 145 each coordinate AMP. R173 lines the ATP pocket.

This sequence belongs to the adenylate kinase family. Monomer.

Its subcellular location is the cytoplasm. It carries out the reaction AMP + ATP = 2 ADP. Its pathway is purine metabolism; AMP biosynthesis via salvage pathway; AMP from ADP: step 1/1. Catalyzes the reversible transfer of the terminal phosphate group between ATP and AMP. Plays an important role in cellular energy homeostasis and in adenine nucleotide metabolism. This chain is Adenylate kinase, found in Campylobacter jejuni subsp. jejuni serotype O:2 (strain ATCC 700819 / NCTC 11168).